The sequence spans 333 residues: GTPase Obg (333 aa).

Positions 1–159 (MKFIDQTIIQ…RDIQLELILI (159 aa)) constitute an Obg domain. The 173-residue stretch at 160-332 (ADVGTLGMPN…LCSDIAFYLQ (173 aa)) folds into the OBG-type G domain. GTP contacts are provided by residues 166–173 (GMPNAGKS), 191–195 (FTTLN), 212–215 (DIPG), 282–285 (NKID), and 313–315 (SSI). Mg(2+)-binding residues include Ser173 and Thr193.

Belongs to the TRAFAC class OBG-HflX-like GTPase superfamily. OBG GTPase family. As to quaternary structure, monomer. The cofactor is Mg(2+).

The protein resides in the cytoplasm. Its function is as follows. An essential GTPase which binds GTP, GDP and possibly (p)ppGpp with moderate affinity, with high nucleotide exchange rates and a fairly low GTP hydrolysis rate. Plays a role in control of the cell cycle, stress response, ribosome biogenesis and in those bacteria that undergo differentiation, in morphogenesis control. This is GTPase Obg from Buchnera aphidicola subsp. Schizaphis graminum (strain Sg).